The primary structure comprises 354 residues: Peptide chain release factor 1 (354 aa).

Gln-232 is subject to N5-methylglutamine.

It belongs to the prokaryotic/mitochondrial release factor family. Post-translationally, methylated by PrmC. Methylation increases the termination efficiency of RF1.

The protein localises to the cytoplasm. Functionally, peptide chain release factor 1 directs the termination of translation in response to the peptide chain termination codons UAG and UAA. This chain is Peptide chain release factor 1, found in Phytoplasma australiense.